A 303-amino-acid polypeptide reads, in one-letter code: Tyrosine recombinase XerC (303 aa).

A Core-binding (CB) domain is found at 3 to 89 (IQNDQWVSAF…TLRSFYQFLV (87 aa)). Residues 110 to 297 (KLPSFLYEEE…TKDRLRDVYR (188 aa)) form the Tyr recombinase domain. Residues R150, K174, H249, R252, and H275 contribute to the active site. Residue Y284 is the O-(3'-phospho-DNA)-tyrosine intermediate of the active site.

The protein belongs to the 'phage' integrase family. XerC subfamily. In terms of assembly, forms a cyclic heterotetrameric complex composed of two molecules of XerC and two molecules of XerD.

The protein localises to the cytoplasm. In terms of biological role, site-specific tyrosine recombinase, which acts by catalyzing the cutting and rejoining of the recombining DNA molecules. The XerC-XerD complex is essential to convert dimers of the bacterial chromosome into monomers to permit their segregation at cell division. It also contributes to the segregational stability of plasmids. This Halalkalibacterium halodurans (strain ATCC BAA-125 / DSM 18197 / FERM 7344 / JCM 9153 / C-125) (Bacillus halodurans) protein is Tyrosine recombinase XerC.